The sequence spans 44 residues: Photosystem I reaction center subunit IX (44 aa).

Residues 9–29 (FIRSAPVVAAVWLSLTAGIII) traverse the membrane as a helical segment.

Belongs to the PsaJ family.

It is found in the cellular thylakoid membrane. In terms of biological role, may help in the organization of the PsaE and PsaF subunits. The sequence is that of Photosystem I reaction center subunit IX from Prochlorococcus marinus subsp. pastoris (strain CCMP1986 / NIES-2087 / MED4).